Consider the following 626-residue polypeptide: Chaperone protein HtpG (626 aa).

The tract at residues 1–341 (METKQFKAES…SEDLSLNISR (341 aa)) is a; substrate-binding. A b region spans residues 342 to 552 (EILQHDRQLK…EGELSIEMEK (211 aa)). The segment at 553–626 (VLNAMPNNQN…FTNNICKIMK (74 aa)) is c.

This sequence belongs to the heat shock protein 90 family. Homodimer.

The protein localises to the cytoplasm. Its function is as follows. Molecular chaperone. Has ATPase activity. The sequence is that of Chaperone protein HtpG from Clostridium botulinum (strain 657 / Type Ba4).